The chain runs to 103 residues: MIILKDGYKEFADCMYYFLHYYIGYGRYTYSATNGSCDKGEYLDKRHNQCCNRCPPGEFAKVRCNGNDNTKCERCPPHTYTTIPIILMDVINVENAQPDHLIR.

Residues 36 to 73 (SCDKGEYLDKRHNQCCNRCPPGEFAKVRCNGNDNTKCE) form a TNFR-Cys 1 repeat. Cystine bridges form between Cys37/Cys50, Cys51/Cys64, and Cys54/Cys72. A TNFR-Cys 2; truncated repeat occupies 74-103 (RCPPHTYTTIPIILMDVINVENAQPDHLIR).

The protein belongs to the poxviridae A53R protein family.

The protein is Truncated secreted TNF-receptor-like protein A53R of Vaccinia virus (strain Western Reserve) (VACV).